The following is a 207-amino-acid chain: rRNA N(6)-adenosine-methyltransferase METTL5 (207 aa).

S-adenosyl-L-methionine is bound by residues glutamine 25, threonine 28, glycine 56, cysteine 59, valine 61, aspartate 78, and 105-106; that span reads DV.

This sequence belongs to the methyltransferase superfamily. PrmA family.

Its subcellular location is the nucleus. The protein localises to the presynapse. The protein resides in the postsynapse. It catalyses the reaction adenosine(1832) in 18S rRNA + S-adenosyl-L-methionine = N(6)-methyladenosine(1832) in 18S rRNA + S-adenosyl-L-homocysteine + H(+). With respect to regulation, rRNA N6-adenosine-methyltransferase activity is inhibited by zinc. Functionally, catalytic subunit of a heterodimer with TRMT112, which specifically methylates the 6th position of adenine in position 1832 of 18S rRNA. N6-methylation of adenine(1832) in 18S rRNA resides in the decoding center of 18S rRNA and is required for translation and embryonic stem cells (ESCs) pluripotency and differentiation. In Danio rerio (Zebrafish), this protein is rRNA N(6)-adenosine-methyltransferase METTL5.